Consider the following 89-residue polypeptide: Small ribosomal subunit protein uS15 (89 aa).

A compositionally biased stretch (basic and acidic residues) spans 1–10; sequence MSITAEKKQE. A disordered region spans residues 1-24; the sequence is MSITAEKKQEVIQSNARAEGDTGS.

Belongs to the universal ribosomal protein uS15 family. As to quaternary structure, part of the 30S ribosomal subunit. Forms a bridge to the 50S subunit in the 70S ribosome, contacting the 23S rRNA.

In terms of biological role, one of the primary rRNA binding proteins, it binds directly to 16S rRNA where it helps nucleate assembly of the platform of the 30S subunit by binding and bridging several RNA helices of the 16S rRNA. Forms an intersubunit bridge (bridge B4) with the 23S rRNA of the 50S subunit in the ribosome. This is Small ribosomal subunit protein uS15 from Novosphingobium aromaticivorans (strain ATCC 700278 / DSM 12444 / CCUG 56034 / CIP 105152 / NBRC 16084 / F199).